A 481-amino-acid polypeptide reads, in one-letter code: MPIINKTMLITYADSLGKNLKELNENIENYFGDAVGGVHLLPFFPSTGDRGFAPIDYHEVDSAFGDWDDVKCLGEKYYLMFDFMINHISRQSKYYKDYQEKHEASAYKDLFLNWDKFWPKNRPTQEDVDLIYKRKDRAPKQEIQFADGSVEHLWNTFGEEQIDLDVTKEVTMDFIRSTIENLAANGCDLIRLDAFAYAVKKLDTNDFFVEPEIWTLLDKVRDIAAVSGAEILPEIHEHYTIQFKIADHDYYVYDFALPMVTLYSLYSSKVDRLAKWLKMSPMKQFTTLDTHDGIGVVDVKDILTDEEITYTSNELYKVGANVNRKYSTAEYNNLDIYQINSTYYSALGDDDQKYFLARLIQAFAPGIPQVYYVGFLAGKNDLELLESTKEGRNINRHYYSSEEIAKEVKRPVVKALLNLFTYRNQSAAFDLDGRIEVETPNEATIVIERQNKDGSHIAKAEINLQDMTYRVTENDQTISFE.

Residues aspartate 49, histidine 87, arginine 191–aspartate 193, glutamate 234, histidine 291–aspartate 292, aspartate 335–glutamine 338, and arginine 392 contribute to the sucrose site. The active-site Nucleophile is aspartate 193. Glutamate 234 functions as the Proton donor in the catalytic mechanism.

It belongs to the glycosyl hydrolase 13 family. Sucrose phosphorylase subfamily.

The protein resides in the cytoplasm. It carries out the reaction sucrose + phosphate = D-fructose + alpha-D-glucose 1-phosphate. Its function is as follows. Intracellular catabolism of sucrose. Being intracellular, probably not involved in synthesis of extracellular polysaccharides. The sequence is that of Sucrose phosphorylase from Streptococcus mutans serotype c (strain ATCC 700610 / UA159).